The chain runs to 85 residues: Large ribosomal subunit protein bL27 (85 aa).

The interval methionine 1–glycine 22 is disordered.

It belongs to the bacterial ribosomal protein bL27 family.

This is Large ribosomal subunit protein bL27 from Nitrosomonas europaea (strain ATCC 19718 / CIP 103999 / KCTC 2705 / NBRC 14298).